The primary structure comprises 283 residues: GDP-polyphosphate phosphotransferase (283 aa).

It belongs to the polyphosphate kinase 2 (PPK2) family. Class I subfamily.

The catalysed reaction is [phosphate](n) + GTP = [phosphate](n+1) + GDP. In terms of biological role, uses inorganic polyphosphate (polyP) as a donor to convert GDP to GTP. The sequence is that of GDP-polyphosphate phosphotransferase from Mycolicibacterium smegmatis (strain ATCC 700084 / mc(2)155) (Mycobacterium smegmatis).